The sequence spans 456 residues: Solute carrier family 49 member 4 homolog (456 aa).

Topologically, residues Met-1–Arg-29 are cytoplasmic. The short motif at Leu-14 to Leu-15 is the Di-leucine motif; mediates lysosomal localization element. A helical membrane pass occupies residues Trp-30–Trp-50. The Lumenal segment spans residues Gly-51–Asp-67. Residues Ile-68 to Leu-88 traverse the membrane as a helical segment. The Cytoplasmic portion of the chain corresponds to Met-89–Arg-95. A helical membrane pass occupies residues Ile-96 to Val-116. Over Glu-117–Arg-123 the chain is Lumenal. The chain crosses the membrane as a helical span at residues Ile-124–Ala-144. The Cytoplasmic portion of the chain corresponds to Pro-145–Ala-162. A helical transmembrane segment spans residues Ile-163 to Val-183. Topologically, residues Pro-184–Glu-207 are lumenal. Asn-187 is a glycosylation site (N-linked (GlcNAc...) asparagine). A helical transmembrane segment spans residues Ala-208–Phe-228. The Cytoplasmic portion of the chain corresponds to Pro-229–Arg-259. Residues Phe-260–Val-280 traverse the membrane as a helical segment. Residues Leu-281–Gln-292 lie on the Lumenal side of the membrane. A helical transmembrane segment spans residues Val-293 to Val-313. At Gly-314–Pro-326 the chain is on the cytoplasmic side. A helical membrane pass occupies residues Ile-327 to Leu-347. The Lumenal segment spans residues Ser-348–Thr-362. Residue Asn-349 is glycosylated (N-linked (GlcNAc...) asparagine). The chain crosses the membrane as a helical span at residues Ser-363–Val-383. Over Glu-384–Gly-392 the chain is Cytoplasmic. Residues Ile-393–Leu-413 traverse the membrane as a helical segment. The Lumenal segment spans residues Thr-414–Leu-420. Residues Ser-421 to Phe-441 form a helical membrane-spanning segment. At Arg-442 to Val-456 the chain is on the cytoplasmic side.

This sequence belongs to the major facilitator superfamily.

The protein resides in the lysosome membrane. It carries out the reaction pyridoxine(out) + n H(+)(out) = pyridoxine(in) + n H(+)(in). Mediates H(+)-dependent pyridoxine transport. The protein is Solute carrier family 49 member 4 homolog (slc49a4) of Xenopus laevis (African clawed frog).